Here is a 250-residue protein sequence, read N- to C-terminus: uncharacterized protein (250 aa).

This is an uncharacterized protein from Sulfolobus islandicus filamentous virus (isolate Iceland/Hveragerdi) (SIFV).